A 321-amino-acid polypeptide reads, in one-letter code: Small ribosomal subunit biogenesis GTPase RsgA (321 aa).

Positions 89–248 (QSWINRPPVA…VADTPGFNRP (160 aa)) constitute a CP-type G domain. GTP-binding positions include 138 to 141 (TKRD) and 190 to 198 (GPSGVGKTS). Zn(2+) is bound by residues C273, C278, H280, and C286.

Belongs to the TRAFAC class YlqF/YawG GTPase family. RsgA subfamily. As to quaternary structure, monomer. Associates with 30S ribosomal subunit, binds 16S rRNA. Zn(2+) is required as a cofactor.

The protein resides in the cytoplasm. One of several proteins that assist in the late maturation steps of the functional core of the 30S ribosomal subunit. Helps release RbfA from mature subunits. May play a role in the assembly of ribosomal proteins into the subunit. Circularly permuted GTPase that catalyzes slow GTP hydrolysis, GTPase activity is stimulated by the 30S ribosomal subunit. This is Small ribosomal subunit biogenesis GTPase RsgA from Prochlorococcus marinus (strain MIT 9303).